We begin with the raw amino-acid sequence, 660 residues long: Protein SCARECROW 2 (660 aa).

2 disordered regions span residues 1–33 and 190–286; these read MGSS…ITSL and SDPA…KQRD. A compositionally biased stretch (pro residues) spans 192–229; sequence PAPPPPPPSHPALLPPDATAPPPPPTSVAALPPPPPAQ. The span at 259 to 272 shows a compositional bias: low complexity; the sequence is AAAAAAAAAAAAAA. Residues 262–289 adopt a coiled-coil conformation; sequence AAAAAAAAAAAAKERKEEQRRKQRDEEG. Positions 273 to 286 are enriched in basic and acidic residues; the sequence is AKERKEEQRRKQRD. In terms of domain architecture, GRAS spans 283 to 653; that stretch reads KQRDEEGLHL…LCLLTASAWR (371 aa). The tract at residues 290–354 is leucine repeat I (LRI); that stretch reads LHLLTLLLQC…VSSCLGLYAP (65 aa). Residues 297–301 carry the LxCxE motif motif; it reads LQCAE. Residues 373-438 form a VHIID region; the sequence is FQVFNGISPF…GGPPRVRLTG (66 aa). Residues 404–408 carry the VHIID motif; it reads VHIID. The segment at 448–480 is leucine repeat II (LRII); sequence ATGKRLSDFADTLGLPFEFCPVADKAGNLDPEK. The PFYRE stretch occupies residues 489 to 576; the sequence is VAVHWLRHSL…QQLLSREIRN (88 aa). The interval 579–653 is SAW; it reads AVGGPARTGD…LCLLTASAWR (75 aa).

It belongs to the GRAS family.

The protein resides in the cytoplasm. Probable transcription factor involved in asmmetric cell division in the cortex/endodermis progenitor cell and in the process of stomata and ligule formation in leaves. The sequence is that of Protein SCARECROW 2 (SCR2) from Oryza sativa subsp. indica (Rice).